Here is a 571-residue protein sequence, read N- to C-terminus: Streptolysin O (571 aa).

A signal peptide spans 1–33 (MSNKKTFKKYSRVAGLLTAALIIGNLVTANAES). Residues 30–108 (NAESNKQNTA…KKSEEDHTEE (79 aa)) are disordered. Residues 37-48 (NTASTETTTTNE) show a composition bias toward low complexity. Composition is skewed to basic and acidic residues over residues 50–68 (PKPESSELTTEKAGQKTDD) and 79–108 (APKEMPLESAEKEEKKSEDKKKSEEDHTEE). Beta stranded transmembrane passes span 260-273 (KSQIEAALNVNSKI), 280-289 (IDFKSISKGE), 358-367 (SNDVEAAFSA), and 375-387 (KTNGKYSDILENS). The short motif at 529–539 (ECTGLAWEWWR) is the Conserved undecapeptide element. Residues 561-562 (TL) carry the Cholesterol binding motif.

The protein belongs to the cholesterol-dependent cytolysin family. In terms of assembly, homooligomeric pore complex of 35 to 50 subunits; when inserted in the host membrane.

It localises to the secreted. The protein resides in the host cell membrane. A cholesterol-dependent toxin that causes cytolysis by forming pores in cholesterol containing host membranes. After binding to target membranes, the protein undergoes a major conformation change, leading to its insertion in the host membrane and formation of an oligomeric pore complex. Cholesterol is required for binding to host membranes, membrane insertion and pore formation; cholesterol binding is mediated by a Thr-Leu pair in the C-terminus. Can be reversibly inactivated by oxidation. The polypeptide is Streptolysin O (slo) (Streptococcus pyogenes serotype M3 (strain ATCC BAA-595 / MGAS315)).